A 197-amino-acid chain; its full sequence is Large ribosomal subunit protein bL25 (197 aa).

Belongs to the bacterial ribosomal protein bL25 family. CTC subfamily. As to quaternary structure, part of the 50S ribosomal subunit; part of the 5S rRNA/L5/L18/L25 subcomplex. Contacts the 5S rRNA. Binds to the 5S rRNA independently of L5 and L18.

This is one of the proteins that binds to the 5S RNA in the ribosome where it forms part of the central protuberance. In Hydrogenobaculum sp. (strain Y04AAS1), this protein is Large ribosomal subunit protein bL25.